The sequence spans 864 residues: 3-O-alpha-D-mannopyranosyl-alpha-D-mannopyranose xylosylphosphotransferase (864 aa).

Residues Met-1–Ile-66 form a disordered region. Residues Met-1–Thr-82 lie on the Cytoplasmic side of the membrane. Composition is skewed to low complexity over residues Ser-16 to Pro-29 and Ser-42 to Leu-52. A helical transmembrane segment spans residues Leu-83–Leu-103. The Lumenal segment spans residues Ser-104–Asp-864. Residues Asn-200, Asn-301, and Asn-583 are each glycosylated (N-linked (GlcNAc...) asparagine).

The protein belongs to the XPT1 family. Mn(2+) serves as cofactor.

The protein localises to the golgi apparatus membrane. The enzyme catalyses 3-alpha-D-mannopyranosyl-alpha-D-mannopyranose + UDP-alpha-D-xylose = 3-O-(6-O-alpha-D-xylosylphospho-alpha-D-mannopyranosyl)-alpha-D-mannopyranose + UMP + H(+). Functionally, xylosylphosphotransferase that is specific for UDP-xylose as a donor and mannose as an acceptor to form a xylose-alpha-1-phosphate-6-mannose linkage. Functions in the O-glycosylation of proteins en route through the secretory pathway. This is 3-O-alpha-D-mannopyranosyl-alpha-D-mannopyranose xylosylphosphotransferase (XPT1) from Cryptococcus neoformans var. grubii (Filobasidiella neoformans var. grubii).